Consider the following 95-residue polypeptide: Orphan antitoxin ParD2 (95 aa).

In terms of biological role, antitoxin component of a non-functional type II toxin-antitoxin (TA system). Does not neutralize the effect of any of the RelE or ParE toxins. This is Orphan antitoxin ParD2 (parD2) from Caulobacter vibrioides (strain ATCC 19089 / CIP 103742 / CB 15) (Caulobacter crescentus).